A 377-amino-acid chain; its full sequence is dTDP-fucopyranose mutase (377 aa).

FAD-binding positions include Ser-12, 31 to 32 (DD), Asn-39, 58 to 59 (HI), Arg-348, and 355 to 360 (LDMDVC).

It belongs to the UDP-galactopyranose/dTDP-fucopyranose mutase family. FAD is required as a cofactor.

The catalysed reaction is dTDP-alpha-D-fucose = dTDP-alpha-D-fucofuranose. Its pathway is bacterial outer membrane biogenesis; LPS O-antigen biosynthesis. With respect to regulation, inhibited by Cu(2+), while other divalent cations such as Ca(2+), Co(2+), Fe(2+) and Mg(2+) have no obvious effects on enzyme activity. Catalyzes the conversion of dTDP-alpha-D-fucopyranose to dTDP-alpha-D-fucofuranose. This is a step in the biosynthesis of D-fucofuranose, a component of E.coli O52 O antigen. In Escherichia coli, this protein is dTDP-fucopyranose mutase (fcf2).